Consider the following 1465-residue polypeptide: Claspin (1465 aa).

A compositionally biased stretch (low complexity) spans 1 to 12 (MSESLAETAAAA). Disordered stretches follow at residues 1-490 (MSES…KAKV), 544-566 (ATAL…GLRM), and 585-636 (ATEF…TEDM). Phosphoserine occurs at positions 45, 49, 52, 64, 75, 109, and 114. Basic and acidic residues predominate over residues 121–133 (QAEKKTQKEEGKQ). The segment covering 154–163 (KSNKTKKAVK) has biased composition (basic residues). The span at 205-216 (EYDHHQQHEKPA) shows a compositional bias: basic and acidic residues. Over residues 217–228 (KTQKSKKLAKKQ) the composition is skewed to basic residues. 4 stretches are compositionally biased toward basic and acidic residues: residues 229–246 (KQQE…EKKK), 254–263 (KKSDKSKIDS), 273–286 (EDLK…EPQK), and 296–335 (TNKD…EQIV). Residues 260–281 (KIDSLMDNEEDAGEDLKMYQED) are a coiled coil. Positions 336 to 346 (KPKKMAKKNKQ) are enriched in basic residues. A phosphoserine mark is found at S350 and S354. The span at 358–373 (QNEKVDQDHDLKKMSS) shows a compositional bias: basic and acidic residues. Residues 375-388 (NELEMGSDKEDQEM) show a composition bias toward acidic residues. Phosphoserine is present on residues S381, S404, S406, S432, S434, S444, S456, S458, and S468. The segment covering 400-417 (QRMDSESEDEIPKTESEK) has biased composition (basic and acidic residues). Residues 432-441 (SESEPEETAE) show a composition bias toward acidic residues. Over residues 456 to 470 (SESEPELDNPEESAG) the composition is skewed to acidic residues. Residues 564–587 (LRMTREELEAYAKLMEDRAKEATE) are a coiled coil. The segment covering 594–606 (ESDEEDDSENEEP) has biased composition (acidic residues). A Phosphothreonine modification is found at T693. Positions 839–874 (LITKKRMEDLRKKQAEEQEKMAEDEEEGMDVDEEYE) form a coiled coil. The span at 845 to 859 (MEDLRKKQAEEQEKM) shows a compositional bias: basic and acidic residues. A disordered region spans residues 845-977 (MEDLRKKQAE…LDLLQTPKPS (133 aa)). Acidic residues-rich tracts occupy residues 860–875 (AEDE…EYEP), 913–942 (ADED…EANP), and 960–969 (DDNSDEDDLD). Phosphoserine is present on S963. At T973 the chain carries Phosphothreonine. S990 is modified (phosphoserine). Residues 1058-1154 (CSGTFATQLP…AEPVEEIPET (97 aa)) are disordered. The span at 1067-1076 (PSQAPTQQPE) shows a compositional bias: low complexity. S1093 and S1094 each carry phosphoserine. Over residues 1094 to 1103 (SDEEAQEDAL) the composition is skewed to acidic residues. Over residues 1109-1123 (RNKKLTKKRPKKKAK) the composition is skewed to basic residues. Over residues 1127–1154 (SDDEDSDDEVEEFDEESDAEPVEEIPET) the composition is skewed to acidic residues. At S1287 the chain carries Phosphoserine.

The protein belongs to the claspin family. In terms of processing, phosphorylated in response to DNA damage by IR and HU treatment. Phosphorylation does not require mei-41 or tefu. Detected in the ovary but not in the testis (at protein level).

Its subcellular location is the nucleus. Required for checkpoint signaling in response to DNA replication stress; either resulting from normal embryogenesis or induced by the DNA synthesis inhibitor hydroxyurea (HU). It is not required for the G2 arrest resulting from DNA double strand breaks induced by ionizing irradiation (IR). Necessary for the timely phosphorylation of Cdk1 at the mid-blastula transition. May have a minor role in maintaining genomic stability in mitotic cells. The polypeptide is Claspin (Drosophila melanogaster (Fruit fly)).